A 339-amino-acid polypeptide reads, in one-letter code: Fe-S cluster assembly protein DRE2 (339 aa).

The segment at 1 to 157 (MTRILLLLHP…KKLSSTHAAV (157 aa)) is N-terminal SAM-like domain. The segment at 158–206 (GLTDTSASNTDEENDDVNSKRKLQETKLAYFSESDDEDEEDQIIDENNL) is linker. [2Fe-2S] cluster contacts are provided by Cys-221, Cys-233, Cys-236, and Cys-238. Positions 221-238 (CELPNGKKRRKACKDCTC) are fe-S binding site A. Positions 302, 305, 313, and 316 each coordinate [4Fe-4S] cluster. Short sequence motifs (cx2C motif) lie at residues 302–305 (CSSC) and 313–316 (CDGC). Residues 302-316 (CSSCSLGDAFRCDGC) are fe-S binding site B.

The protein belongs to the anamorsin family. As to quaternary structure, monomer. Interacts with TAH18. Interacts with MIA40. [2Fe-2S] cluster is required as a cofactor. Requires [4Fe-4S] cluster as cofactor.

Its subcellular location is the cytoplasm. The protein resides in the mitochondrion intermembrane space. Component of the cytosolic iron-sulfur (Fe-S) protein assembly (CIA) machinery required for the maturation of extramitochondrial Fe-S proteins. Part of an electron transfer chain functioning in an early step of cytosolic Fe-S biogenesis, facilitating the de novo assembly of a [4Fe-4S] cluster on the scaffold complex CFD1-NBP35. Electrons are transferred to DRE2 from NADPH via the FAD- and FMN-containing protein TAH18. TAH18-DRE2 are also required for the assembly of the diferric tyrosyl radical cofactor of ribonucleotide reductase (RNR), probably by providing electrons for reduction during radical cofactor maturation in the catalytic small subunit RNR2. The chain is Fe-S cluster assembly protein DRE2 from Debaryomyces hansenii (strain ATCC 36239 / CBS 767 / BCRC 21394 / JCM 1990 / NBRC 0083 / IGC 2968) (Yeast).